Here is a 571-residue protein sequence, read N- to C-terminus: Protein dead ringer homolog (571 aa).

Disordered stretches follow at residues 45 to 117 (QHQQ…EPDK) and 190 to 229 (KRMQ…SCNG). A compositionally biased stretch (basic and acidic residues) spans 49 to 77 (RMMEQHKNDDVISNDVRCDDFSDGGERQR). Residues 195 to 206 (DHNIQQSTNHIP) show a composition bias toward polar residues. The span at 207 to 224 (TPSSASSHTSSGSVTSQT) shows a compositional bias: low complexity. Residues 249–341 (DIKRKEFLDD…YLYPFECERE (93 aa)) form the ARID domain. Low complexity predominate over residues 459 to 471 (AAHHAAQQAAQHQ). The tract at residues 459–528 (AAHHAAQQAA…GDRGRHNEMS (70 aa)) is disordered. The region spanning 473–558 (SLKKEIDSDY…GVLFAHSPNH (86 aa)) is the REKLES domain. Basic and acidic residues-rich tracts occupy residues 487-507 (PPEK…DNQR) and 518-527 (MGDRGRHNEM).

Its subcellular location is the nucleus. In terms of biological role, transcription factor. The polypeptide is Protein dead ringer homolog (Ci-DRIL1/2) (Ciona intestinalis (Transparent sea squirt)).